Reading from the N-terminus, the 226-residue chain is Chalcone--flavanone isomerase 2-A (226 aa).

Residues T49, N114, and S191 each contribute to the substrate site.

Belongs to the chalcone isomerase family. In terms of tissue distribution, mostly expressed in flowers, and, to a lower extent, in roots, shoots, and seeds.

It catalyses the reaction a chalcone = a flavanone.. Its pathway is secondary metabolite biosynthesis; flavonoid biosynthesis. Functionally, catalyzes the intramolecular cyclization of bicyclic chalcones into tricyclic (S)-flavanones. Responsible for the isomerization of 4,2',4',6'-tetrahydroxychalcone (also termed chalcone) into naringenin. The polypeptide is Chalcone--flavanone isomerase 2-A (CHI2-A) (Glycine max (Soybean)).